The primary structure comprises 678 residues: Zinc finger translocation-associated protein (678 aa).

Disordered regions lie at residues 1 to 100 (MEPG…PGRD), 182 to 250 (LGVQ…GSRG), 329 to 417 (QPEA…HRRH), and 490 to 583 (LGPP…NYQP). The span at 62-78 (SAPLPSSRARGPASSGR) shows a compositional bias: low complexity. Residues 79–88 (KYSDHCEARA) show a composition bias toward basic and acidic residues. Positions 187–201 (AEEEEEEEEEEEEEG) are enriched in acidic residues. A Glycyl lysine isopeptide (Lys-Gly) (interchain with G-Cter in SUMO2) cross-link involves residue Lys375. Residues 388–398 (AEEEEELEEGE) are compositionally biased toward acidic residues. The segment covering 492–504 (PPRPESPQGPIPP) has biased composition (pro residues). Acidic residues-rich tracts occupy residues 513-529 (GGGDEEEEPEEEEEEWG) and 543-553 (AEEEEDEEDGQ). Over residues 560 to 572 (LPPPPPPPPPPPP) the composition is skewed to pro residues. A compositionally biased stretch (basic and acidic residues) spans 573–583 (RSREQRRNYQP).

This is Zinc finger translocation-associated protein from Homo sapiens (Human).